Consider the following 284-residue polypeptide: Steroidogenic acute regulatory protein, mitochondrial (284 aa).

The transit peptide at 1-62 (MFLATFKLCA…RRSSLLGSQL (62 aa)) directs the protein to the mitochondrion. Phosphoserine; by PKA is present on residues Ser56 and Ser194. The START domain occupies 66-279 (LYSDQELSYI…LRKRLEASPA (214 aa)).

May interact with TSPO. Expressed within glia and neurons in discrete regions of the brain.

It localises to the mitochondrion. The enzyme catalyses cholesterol(in) = cholesterol(out). The protein operates within steroid metabolism; cholesterol metabolism. Plays a key role in steroid hormone synthesis by enhancing the metabolism of cholesterol into pregnenolone. Transporter that binds to and transport cholesterol through the intermembrane space of the mitochondrion. This is Steroidogenic acute regulatory protein, mitochondrial (Star) from Mus musculus (Mouse).